Consider the following 220-residue polypeptide: Aspartic protease inhibitor 2 (220 aa).

The N-terminal stretch at 1–23 is a signal peptide; it reads MMKCLFLLCLCLLPIVVFSSTFT. Residues 24 to 32 constitute a propeptide that is removed on maturation; sequence SQNLIDLPS. A Vacuolar targeting signal motif is present at residues 26–31; sequence NLIDLP. Asn-51 is a glycosylation site (N-linked (GlcNAc...) asparagine). Disulfide bonds link Cys-80–Cys-125 and Cys-174–Cys-185.

Belongs to the protease inhibitor I3 (leguminous Kunitz-type inhibitor) family. As to expression, tubers.

It is found in the vacuole. Its function is as follows. Inhibitor of cathepsin D (aspartic protease). May also inhibit trypsin and chymotrypsin (serine proteases). Protects the plant by inhibiting proteases of invading organisms. This chain is Aspartic protease inhibitor 2, found in Solanum tuberosum (Potato).